The following is a 245-amino-acid chain: Ribosomal RNA small subunit methyltransferase G (245 aa).

S-adenosyl-L-methionine contacts are provided by residues Gly85, Phe90, 108 to 110 (DST), 136 to 137 (AE), and Arg155.

Belongs to the methyltransferase superfamily. RNA methyltransferase RsmG family.

The protein localises to the cytoplasm. Its function is as follows. Specifically methylates the N7 position of a guanine in 16S rRNA. The sequence is that of Ribosomal RNA small subunit methyltransferase G from Trichormus variabilis (strain ATCC 29413 / PCC 7937) (Anabaena variabilis).